The following is a 235-amino-acid chain: Ribonuclease 3 (235 aa).

The 130-residue stretch at 6–135 folds into the RNase III domain; the sequence is LISLEKILGF…VIGAVYFDCG (130 aa). Glu48 is a binding site for Mg(2+). The active site involves Asp52. Asn121 and Glu124 together coordinate Mg(2+). Glu124 is a catalytic residue. The DRBM domain occupies 162–231; sequence DEKTTLQELL…AKKALELLKN (70 aa).

It belongs to the ribonuclease III family. In terms of assembly, homodimer. Mg(2+) is required as a cofactor.

It is found in the cytoplasm. It carries out the reaction Endonucleolytic cleavage to 5'-phosphomonoester.. Functionally, digests double-stranded RNA. Involved in the processing of primary rRNA transcript to yield the immediate precursors to the large and small rRNAs (23S and 16S). Processes some mRNAs, and tRNAs when they are encoded in the rRNA operon. Processes pre-crRNA and tracrRNA of type II CRISPR loci if present in the organism. This is Ribonuclease 3 from Carboxydothermus hydrogenoformans (strain ATCC BAA-161 / DSM 6008 / Z-2901).